The following is a 530-amino-acid chain: Na(+)/H(+) antiporter NhaB (530 aa).

The next 10 membrane-spanning stretches (helical) occupy residues 13-33, 67-87, 90-110, 138-158, 205-225, 245-265, 302-333, 350-370, 449-469, and 477-497; these read FLGQAPAWYKYTIVAFLLINP, PGGLLAIEAVMIGLTSAETVL, VVGNIEVMLLLIFMVAGIYFL, AAALLSAFLDALTVTAVVIAV, LLMHAAVGTALGGVCTLVGEP, MAPITLPVLVMGFFTCAFLEF, LVIQAITAVWLVIGLATHAASVGLVGLTVIIL, FEEALPFTALLTVFFAVVAVI, VATPNGQAAFLFLLTSALAPL, and MVIMALPYTIVMSITGLVMTA.

Belongs to the NhaB Na(+)/H(+) (TC 2.A.34) antiporter family.

Its subcellular location is the cell inner membrane. It catalyses the reaction 2 Na(+)(in) + 3 H(+)(out) = 2 Na(+)(out) + 3 H(+)(in). Functionally, na(+)/H(+) antiporter that extrudes sodium in exchange for external protons. The polypeptide is Na(+)/H(+) antiporter NhaB (Alcanivorax borkumensis (strain ATCC 700651 / DSM 11573 / NCIMB 13689 / SK2)).